Consider the following 246-residue polypeptide: Transcriptional regulatory protein LytR (246 aa).

Residues 2 to 116 (KALIIDDEPL…RIEQAVNKVR (115 aa)) enclose the Response regulatory domain. A 4-aspartylphosphate modification is found at Asp-53. The region spanning 141–245 (LPVEIDDKIH…MKDFKASIGL (105 aa)) is the HTH LytTR-type domain.

Homodimer; when phosphorylated. In terms of processing, phosphorylated and dephosphorylated by LytS.

It is found in the cytoplasm. In terms of biological role, member of the two-component regulatory system LytR/LytS that regulates genes involved in autolysis, programmed cell death, biofilm formation and cell wall metabolism. Also participates in sensing and responding to host defense cationic antimicrobial peptides (HDPs). Upon phosphorylation by LytS, functions as a transcription regulator by direct binding to promoter regions of target genes including lrgA and lrgB, to positively regulate their expression. This chain is Transcriptional regulatory protein LytR (lytR), found in Staphylococcus aureus (strain MW2).